The chain runs to 399 residues: 1-deoxy-D-xylulose 5-phosphate reductoisomerase (399 aa).

Residues Thr-13, Gly-14, Ser-15, Ile-16, and Asn-127 each coordinate NADPH. Position 128 (Lys-128) interacts with 1-deoxy-D-xylulose 5-phosphate. Glu-129 is a binding site for NADPH. Asp-153 contacts Mn(2+). 1-deoxy-D-xylulose 5-phosphate-binding residues include Ser-154, Glu-155, Ser-187, and His-210. Glu-155 contributes to the Mn(2+) binding site. Position 216 (Gly-216) interacts with NADPH. 1-deoxy-D-xylulose 5-phosphate-binding residues include Ser-223, Asn-228, Lys-229, and Glu-232. Glu-232 is a Mn(2+) binding site.

Belongs to the DXR family. Requires Mg(2+) as cofactor. Mn(2+) is required as a cofactor.

It catalyses the reaction 2-C-methyl-D-erythritol 4-phosphate + NADP(+) = 1-deoxy-D-xylulose 5-phosphate + NADPH + H(+). It functions in the pathway isoprenoid biosynthesis; isopentenyl diphosphate biosynthesis via DXP pathway; isopentenyl diphosphate from 1-deoxy-D-xylulose 5-phosphate: step 1/6. Its function is as follows. Catalyzes the NADPH-dependent rearrangement and reduction of 1-deoxy-D-xylulose-5-phosphate (DXP) to 2-C-methyl-D-erythritol 4-phosphate (MEP). The chain is 1-deoxy-D-xylulose 5-phosphate reductoisomerase from Bordetella pertussis (strain Tohama I / ATCC BAA-589 / NCTC 13251).